A 236-amino-acid polypeptide reads, in one-letter code: Acetate--CoA ligase [ADP-forming] II subunit beta (236 aa).

Positions 26-62 constitute an ATP-grasp domain; the sequence is KQVLKAYGLPVPEEKLAKTLDEALKYAEEIGYPVAMK. 52-63 serves as a coordination point for ATP; that stretch reads AEEIGYPVAMKL.

The protein belongs to the acetate CoA ligase beta subunit family. In terms of assembly, heterotetramer of two alpha and two beta subunits.

The catalysed reaction is acetate + ATP + CoA = acetyl-CoA + ADP + phosphate. Its function is as follows. Catalyzes the reversible formation of acetate and ATP from acetyl-CoA by using ADP and phosphate. Can use other substrates such as phenylacetyl-CoA, indoleacetyl-CoA and isobutyryl-CoA, but not succinyl-CoA. Seems to be involved primarily in the degradation of aryl-CoA esters to the corresponding acids. Participates in the conversion of acetyl-CoA to acetate and in the degradation of branched-chain amino acids via branched-chain-acyl-CoA esters. This chain is Acetate--CoA ligase [ADP-forming] II subunit beta, found in Pyrococcus furiosus (strain ATCC 43587 / DSM 3638 / JCM 8422 / Vc1).